Consider the following 99-residue polypeptide: Large ribosomal subunit protein uL23 (99 aa).

The protein belongs to the universal ribosomal protein uL23 family. Part of the 50S ribosomal subunit. Contacts protein L29, and trigger factor when it is bound to the ribosome.

In terms of biological role, one of the early assembly proteins it binds 23S rRNA. One of the proteins that surrounds the polypeptide exit tunnel on the outside of the ribosome. Forms the main docking site for trigger factor binding to the ribosome. The protein is Large ribosomal subunit protein uL23 of Stutzerimonas stutzeri (strain A1501) (Pseudomonas stutzeri).